Reading from the N-terminus, the 183-residue chain is Small ribosomal subunit protein cS23y (183 aa).

This sequence belongs to the chloroplast-specific ribosomal protein cS23 family. As to quaternary structure, part of the 30S ribosomal subunit.

It is found in the plastid. The protein localises to the chloroplast. Functionally, component of the chloroplast ribosome (chloro-ribosome), a dedicated translation machinery responsible for the synthesis of chloroplast genome-encoded proteins, including proteins of the transcription and translation machinery and components of the photosynthetic apparatus. The protein is Small ribosomal subunit protein cS23y of Arabidopsis thaliana (Mouse-ear cress).